A 332-amino-acid polypeptide reads, in one-letter code: Putative pumilio homolog 17 (332 aa).

Residues 1 to 302 (MTNINRLSMS…ILTADLFYSL (302 aa)) enclose the PUM-HD domain. The Pumilio 1 repeat unit spans residues 82–117 (SDSDYFMVITRNKNGSKSLQKLMRMSDDMDVFFFVA). Residues 118–152 (IMRLFIHVMIDKYASYVAIQGMRIFKQDKRELMYD) form a Pumilio 2; degenerate repeat. 4 Pumilio repeats span residues 153-188 (HILR…DELM), 189-225 (DIVS…NIAD), 226-264 (KLCG…DLLA), and 265-300 (CKTE…DLFY).

It localises to the cytoplasm. In terms of biological role, sequence-specific RNA-binding protein that regulates translation and mRNA stability by binding the 3'-UTR of target mRNAs. The chain is Putative pumilio homolog 17 (APUM17) from Arabidopsis thaliana (Mouse-ear cress).